Consider the following 294-residue polypeptide: Malate dehydrogenase (294 aa).

NAD(+) is bound by residues 7-12 (GAGRVG) and Asp32. Arg81 and Arg87 together coordinate substrate. Residues Asn94 and 117–119 (VTN) each bind NAD(+). Substrate is bound by residues Asn119 and Arg150. The Proton acceptor role is filled by His172.

The protein belongs to the LDH/MDH superfamily. As to quaternary structure, homodimer.

The protein resides in the cytoplasm. The catalysed reaction is (S)-malate + NAD(+) = oxaloacetate + NADH + H(+). Catalyzes the reversible oxidation of malate to oxaloacetate. Can also oxidize tartrate. The protein is Malate dehydrogenase (mdh) of Archaeoglobus fulgidus (strain ATCC 49558 / DSM 4304 / JCM 9628 / NBRC 100126 / VC-16).